The primary structure comprises 368 residues: tRNA-specific 2-thiouridylase MnmA (368 aa).

Residues 11–18 (GMSGGVDS) and methionine 37 each bind ATP. An interaction with target base in tRNA region spans residues 97–99 (NPD). Residue cysteine 102 is the Nucleophile of the active site. Cysteine 102 and cysteine 199 are disulfide-bonded. ATP is bound at residue glycine 127. Residues 149–151 (KDQ) form an interaction with tRNA region. Cysteine 199 functions as the Cysteine persulfide intermediate in the catalytic mechanism. Residues 311 to 312 (RY) are interaction with tRNA.

This sequence belongs to the MnmA/TRMU family. Interacts with TusE.

The protein resides in the cytoplasm. It carries out the reaction S-sulfanyl-L-cysteinyl-[protein] + uridine(34) in tRNA + AH2 + ATP = 2-thiouridine(34) in tRNA + L-cysteinyl-[protein] + A + AMP + diphosphate + H(+). Functionally, catalyzes the 2-thiolation of uridine at the wobble position (U34) of tRNA(Lys), tRNA(Glu) and tRNA(Gln), leading to the formation of s(2)U34, the first step of tRNA-mnm(5)s(2)U34 synthesis. Sulfur is provided by IscS, via a sulfur-relay system. Binds ATP and its substrate tRNAs. This is tRNA-specific 2-thiouridylase MnmA from Klebsiella pneumoniae subsp. pneumoniae (strain ATCC 700721 / MGH 78578).